We begin with the raw amino-acid sequence, 61 residues long: Small ribosomal subunit protein uS14 (61 aa).

The Zn(2+) site is built by Cys24, Cys27, Cys40, and Cys43.

It belongs to the universal ribosomal protein uS14 family. Zinc-binding uS14 subfamily. In terms of assembly, part of the 30S ribosomal subunit. Contacts proteins S3 and S10. Zn(2+) is required as a cofactor.

Binds 16S rRNA, required for the assembly of 30S particles and may also be responsible for determining the conformation of the 16S rRNA at the A site. The polypeptide is Small ribosomal subunit protein uS14 (Clostridioides difficile (strain 630) (Peptoclostridium difficile)).